Consider the following 118-residue polypeptide: MARIAGINIPDHKHAVIALTSIYGVGKTRSKAILAAAGIAEDVKISELSEGQIDTLRDEVAKFVVEGDLRREISMSIKRLMDLGCYRGLRHRRGLPVRGQRTKTNARTRKGPRKPIKK.

The segment at 94–118 (GLPVRGQRTKTNARTRKGPRKPIKK) is disordered.

It belongs to the universal ribosomal protein uS13 family. Part of the 30S ribosomal subunit. Forms a loose heterodimer with protein S19. Forms two bridges to the 50S subunit in the 70S ribosome.

Located at the top of the head of the 30S subunit, it contacts several helices of the 16S rRNA. In the 70S ribosome it contacts the 23S rRNA (bridge B1a) and protein L5 of the 50S subunit (bridge B1b), connecting the 2 subunits; these bridges are implicated in subunit movement. Contacts the tRNAs in the A and P-sites. In Shigella dysenteriae serotype 1 (strain Sd197), this protein is Small ribosomal subunit protein uS13.